We begin with the raw amino-acid sequence, 414 residues long: Gamma-glutamyl phosphate reductase (414 aa).

Belongs to the gamma-glutamyl phosphate reductase family.

The protein localises to the cytoplasm. It carries out the reaction L-glutamate 5-semialdehyde + phosphate + NADP(+) = L-glutamyl 5-phosphate + NADPH + H(+). It participates in amino-acid biosynthesis; L-proline biosynthesis; L-glutamate 5-semialdehyde from L-glutamate: step 2/2. Its function is as follows. Catalyzes the NADPH-dependent reduction of L-glutamate 5-phosphate into L-glutamate 5-semialdehyde and phosphate. The product spontaneously undergoes cyclization to form 1-pyrroline-5-carboxylate. In Bacillus anthracis (strain A0248), this protein is Gamma-glutamyl phosphate reductase.